Reading from the N-terminus, the 124-residue chain is Small ribosomal subunit protein uS13 (124 aa).

A disordered region spans residues 95 to 124 (GLPVRGQRTKTNARTRKGPKRTIAGKKKAR).

This sequence belongs to the universal ribosomal protein uS13 family. In terms of assembly, part of the 30S ribosomal subunit. Forms a loose heterodimer with protein S19. Forms two bridges to the 50S subunit in the 70S ribosome.

Its function is as follows. Located at the top of the head of the 30S subunit, it contacts several helices of the 16S rRNA. In the 70S ribosome it contacts the 23S rRNA (bridge B1a) and protein L5 of the 50S subunit (bridge B1b), connecting the 2 subunits; these bridges are implicated in subunit movement. Contacts the tRNAs in the A and P-sites. This is Small ribosomal subunit protein uS13 from Mycobacterium marinum (strain ATCC BAA-535 / M).